A 281-amino-acid chain; its full sequence is Acidic leucine-rich nuclear phosphoprotein 32-related protein (281 aa).

4 LRR repeats span residues 29–52 (YESL…EKEL), 56–78 (FKNL…IPSI), 79–103 (ATLN…IVQN), and 105–128 (PNIK…TLKE). The region spanning 140–178 (NPFADNPNYRKELFEFLPNVKIIDCYNKEGMEVLSSDEE) is the LRRCT domain. The segment covering 197–244 (FKDEDDEDEEFVPNDNEDDDEDDELDDDLEDEDMEDLDKEDLDKEDYD) has biased composition (acidic residues). The tract at residues 197–281 (FKDEDDEDEE…DMDLKKTKLE (85 aa)) is disordered. Positions 245–266 (IDTKETEGVNKDEKSNKRKQDA) are enriched in basic and acidic residues.

The protein belongs to the ANP32 family.

This Plasmodium falciparum (isolate 3D7) protein is Acidic leucine-rich nuclear phosphoprotein 32-related protein.